We begin with the raw amino-acid sequence, 132 residues long: PGA2-homolog C27.01c (132 aa).

A helical transmembrane segment spans residues 17-34 (WIRIIVYVGGYMLIRPYL). 2 disordered regions span residues 50 to 90 (LLEG…DAEF) and 106 to 132 (EYFK…HLED). The span at 62–75 (EMTHGTKPKEHGEF) shows a compositional bias: basic and acidic residues. The span at 76-87 (DTDDEEEEENPD) shows a compositional bias: acidic residues. Thr-77 carries the post-translational modification Phosphothreonine. Basic and acidic residues predominate over residues 106–115 (EYFKNQDKSP). The span at 119 to 132 (YADDDEDIEEHLED) shows a compositional bias: acidic residues.

This sequence belongs to the PGA2 family.

The protein localises to the endoplasmic reticulum membrane. Its subcellular location is the nucleus membrane. Functionally, involved processing and trafficking glycosylated proteins. The protein is PGA2-homolog C27.01c of Schizosaccharomyces pombe (strain 972 / ATCC 24843) (Fission yeast).